A 547-amino-acid polypeptide reads, in one-letter code: Cilia- and flagella- associated protein 210 (547 aa).

A coiled-coil region spans residues 184–254 (KLNVEKAFKE…EIEMKKKQGK (71 aa)). The interval 210 to 237 (KDHLKQIKEHEEEEERRRKEEEKDAEEI) is disordered.

As to quaternary structure, microtubule inner protein component of sperm flagellar doublet microtubules. Expressed in trachea multiciliated cells.

The protein resides in the cytoplasm. It is found in the cytoskeleton. The protein localises to the cilium axoneme. Its subcellular location is the flagellum axoneme. Functionally, microtubule inner protein (MIP) part of the dynein-decorated doublet microtubules (DMTs) in cilia axoneme, which is required for motile cilia beating. The chain is Cilia- and flagella- associated protein 210 (CFAP210) from Bos taurus (Bovine).